We begin with the raw amino-acid sequence, 263 residues long: Acyl-[acyl-carrier-protein]--UDP-N-acetylglucosamine O-acyltransferase (263 aa).

The protein belongs to the transferase hexapeptide repeat family. LpxA subfamily. In terms of assembly, homotrimer.

It is found in the cytoplasm. The enzyme catalyses a (3R)-hydroxyacyl-[ACP] + UDP-N-acetyl-alpha-D-glucosamine = a UDP-3-O-[(3R)-3-hydroxyacyl]-N-acetyl-alpha-D-glucosamine + holo-[ACP]. The protein operates within glycolipid biosynthesis; lipid IV(A) biosynthesis; lipid IV(A) from (3R)-3-hydroxytetradecanoyl-[acyl-carrier-protein] and UDP-N-acetyl-alpha-D-glucosamine: step 1/6. In terms of biological role, involved in the biosynthesis of lipid A, a phosphorylated glycolipid that anchors the lipopolysaccharide to the outer membrane of the cell. The polypeptide is Acyl-[acyl-carrier-protein]--UDP-N-acetylglucosamine O-acyltransferase (Xanthomonas oryzae pv. oryzae (strain PXO99A)).